An 889-amino-acid chain; its full sequence is DNA mismatch repair protein MutS (889 aa).

Residue 622–629 coordinates ATP; sequence GPNMAGKS. The tract at residues 869 to 889 is disordered; the sequence is QRVKRPEKAPADVTAETEDQE.

Belongs to the DNA mismatch repair MutS family.

Its function is as follows. This protein is involved in the repair of mismatches in DNA. It is possible that it carries out the mismatch recognition step. This protein has a weak ATPase activity. The sequence is that of DNA mismatch repair protein MutS from Desulfatibacillum aliphaticivorans.